The primary structure comprises 206 residues: Phosphoribosylglycinamide formyltransferase (206 aa).

Position 13–15 (13–15 (GTN)) interacts with N(1)-(5-phospho-beta-D-ribosyl)glycinamide. Residues 99-102 (MIIL) and N121 contribute to the (6R)-10-formyltetrahydrofolate site. H123 functions as the Proton donor in the catalytic mechanism. D163 is a (6R)-10-formyltetrahydrofolate binding site. E192 lines the N(1)-(5-phospho-beta-D-ribosyl)glycinamide pocket.

This sequence belongs to the GART family.

It carries out the reaction N(1)-(5-phospho-beta-D-ribosyl)glycinamide + (6R)-10-formyltetrahydrofolate = N(2)-formyl-N(1)-(5-phospho-beta-D-ribosyl)glycinamide + (6S)-5,6,7,8-tetrahydrofolate + H(+). It participates in purine metabolism; IMP biosynthesis via de novo pathway; N(2)-formyl-N(1)-(5-phospho-D-ribosyl)glycinamide from N(1)-(5-phospho-D-ribosyl)glycinamide (10-formyl THF route): step 1/1. The protein is Phosphoribosylglycinamide formyltransferase (purN) of Dictyostelium discoideum (Social amoeba).